Reading from the N-terminus, the 186-residue chain is C-type lectin 37Da (186 aa).

The first 20 residues, M1 to G20, serve as a signal peptide directing secretion. N-linked (GlcNAc...) asparagine glycosylation is found at N35 and N47. A C-type lectin domain is found at I46–K169. An intrachain disulfide couples C140 to C160.

The protein localises to the secreted. In terms of biological role, galactose-specific lectin that displays calcium-dependent activity. Binds to the surface of hemocytes and enhances hemocyte encapsulation and melanization. This is likely by interacting with carbohydrates on the surface of the hemocytes. Also displays agglutination activity against the Gram-negative bacterium E.coli. The chain is C-type lectin 37Da from Drosophila melanogaster (Fruit fly).